Here is a 187-residue protein sequence, read N- to C-terminus: Peptidyl-tRNA hydrolase (187 aa).

Tyr-14 serves as a coordination point for tRNA. His-19 (proton acceptor) is an active-site residue. Positions 60 and 62 each coordinate tRNA.

Belongs to the PTH family. As to quaternary structure, monomer.

Its subcellular location is the cytoplasm. The catalysed reaction is an N-acyl-L-alpha-aminoacyl-tRNA + H2O = an N-acyl-L-amino acid + a tRNA + H(+). In terms of biological role, hydrolyzes ribosome-free peptidyl-tRNAs (with 1 or more amino acids incorporated), which drop off the ribosome during protein synthesis, or as a result of ribosome stalling. Functionally, catalyzes the release of premature peptidyl moieties from peptidyl-tRNA molecules trapped in stalled 50S ribosomal subunits, and thus maintains levels of free tRNAs and 50S ribosomes. The protein is Peptidyl-tRNA hydrolase of Pseudothermotoga lettingae (strain ATCC BAA-301 / DSM 14385 / NBRC 107922 / TMO) (Thermotoga lettingae).